Here is a 761-residue protein sequence, read N- to C-terminus: Elongation factor G, mitochondrial (761 aa).

The transit peptide at 1-33 directs the protein to the mitochondrion; sequence MTSVLRGVLKTHLPRTLTLPRCARNFQTTTFLR. The tr-type G domain maps to 66 to 347; sequence TRLRNIGISA…SVVDYLPQPN (282 aa). GTP is bound by residues 75-82, 146-150, and 200-203; these read AHIDSGKT, DTPGH, and NKMD.

Belongs to the TRAFAC class translation factor GTPase superfamily. Classic translation factor GTPase family. EF-G/EF-2 subfamily.

It is found in the mitochondrion. It participates in protein biosynthesis; polypeptide chain elongation. In terms of biological role, mitochondrial GTPase that catalyzes the GTP-dependent ribosomal translocation step during translation elongation. During this step, the ribosome changes from the pre-translocational (PRE) to the post-translocational (POST) state as the newly formed A-site-bound peptidyl-tRNA and P-site-bound deacylated tRNA move to the P and E sites, respectively. Catalyzes the coordinated movement of the two tRNA molecules, the mRNA and conformational changes in the ribosome. The chain is Elongation factor G, mitochondrial from Candida dubliniensis (strain CD36 / ATCC MYA-646 / CBS 7987 / NCPF 3949 / NRRL Y-17841) (Yeast).